The primary structure comprises 516 residues: H/ACA ribonucleoprotein complex subunit DKC1 (516 aa).

A disordered region spans residues 1–24; the sequence is MADGDGSSVKKRRKKDKRSLPDED. The active-site Nucleophile is the aspartate 123. A PUA domain is found at 294–369; that stretch reads HKRLVMKDSA…VVAKIKRVIM (76 aa). Residues 422–516 form a disordered region; that stretch reads KKEAAKVPQA…KQKEVEESSE (95 aa). A compositionally biased stretch (basic and acidic residues) spans 434–446; the sequence is EVERAPKRKRESE. The span at 453-464 shows a compositional bias: pro residues; it reads SPPPSPATPPPE. Residues 463 to 516 adopt a coiled-coil conformation; sequence PEELSKKEKKKKKKEKKAKEAAESGEEQVEVISESSAKKKKKKKKQKEVEESSE. Over residues 469-478 the composition is skewed to basic residues; that stretch reads KEKKKKKKEK.

It belongs to the pseudouridine synthase TruB family. As to quaternary structure, part of the H/ACA small nucleolar ribonucleoprotein (H/ACA snoRNP) complex, which contains NHP2/NOLA2, GAR1/NOLA1, NOP10/NOLA3, and DKC1/NOLA4, which is presumed to be the catalytic subunit. The complex contains a stable core formed by binding of one or two NOP10-DKC1 heterodimers to NHP2; GAR1 subsequently binds to this core via DKC1. The complex binds a box H/ACA small nucleolar RNA (snoRNA), which may target the specific site of modification within the RNA substrate.

The protein localises to the nucleus. It is found in the nucleolus. The protein resides in the cajal body. It carries out the reaction uridine in 5S rRNA = pseudouridine in 5S rRNA. Its function is as follows. Catalytic subunit of H/ACA small nucleolar ribonucleoprotein (H/ACA snoRNP) complex, which catalyzes pseudouridylation of rRNA. This involves the isomerization of uridine such that the ribose is subsequently attached to C5, instead of the normal N1. Each rRNA can contain up to 100 pseudouridine ('psi') residues, which may serve to stabilize the conformation of rRNAs. Required for ribosome biogenesis and telomere maintenance. The polypeptide is H/ACA ribonucleoprotein complex subunit DKC1 (DKC1) (Gallus gallus (Chicken)).